The following is a 341-amino-acid chain: Methionine import ATP-binding protein MetN 1 (341 aa).

Residues 2-241 (IEFRQVSKTF…PKTTIAQNFV (240 aa)) enclose the ABC transporter domain. 38–45 (GYSGAGKS) is a binding site for ATP.

It belongs to the ABC transporter superfamily. Methionine importer (TC 3.A.1.24) family. As to quaternary structure, the complex is composed of two ATP-binding proteins (MetN), two transmembrane proteins (MetI) and a solute-binding protein (MetQ).

Its subcellular location is the cell membrane. It catalyses the reaction L-methionine(out) + ATP + H2O = L-methionine(in) + ADP + phosphate + H(+). The catalysed reaction is D-methionine(out) + ATP + H2O = D-methionine(in) + ADP + phosphate + H(+). Its function is as follows. Part of the ABC transporter complex MetNIQ involved in methionine import. Responsible for energy coupling to the transport system. The sequence is that of Methionine import ATP-binding protein MetN 1 from Staphylococcus aureus (strain USA300).